The sequence spans 388 residues: Succinate--CoA ligase [ADP-forming] subunit beta (388 aa).

Residues 9–244 (KEILRKYGVT…LDEEDPAEIE (236 aa)) enclose the ATP-grasp domain. ATP is bound by residues Lys-46, 53–55 (GRG), Glu-99, Ala-102, and Glu-107. Mg(2+) is bound by residues Asn-199 and Asp-213. Substrate-binding positions include Asn-264 and 321-323 (GIM).

This sequence belongs to the succinate/malate CoA ligase beta subunit family. As to quaternary structure, heterotetramer of two alpha and two beta subunits. Mg(2+) is required as a cofactor.

It catalyses the reaction succinate + ATP + CoA = succinyl-CoA + ADP + phosphate. The enzyme catalyses GTP + succinate + CoA = succinyl-CoA + GDP + phosphate. It participates in carbohydrate metabolism; tricarboxylic acid cycle; succinate from succinyl-CoA (ligase route): step 1/1. Succinyl-CoA synthetase functions in the citric acid cycle (TCA), coupling the hydrolysis of succinyl-CoA to the synthesis of either ATP or GTP and thus represents the only step of substrate-level phosphorylation in the TCA. The beta subunit provides nucleotide specificity of the enzyme and binds the substrate succinate, while the binding sites for coenzyme A and phosphate are found in the alpha subunit. This is Succinate--CoA ligase [ADP-forming] subunit beta from Herminiimonas arsenicoxydans.